The following is a 1369-amino-acid chain: Microtubule-associated tumor suppressor candidate 2 (1369 aa).

Disordered regions lie at residues 180–262 (ASSS…TQTV), 374–442 (GRGN…FIPN), 477–509 (GENK…VAEN), 582–627 (NTSP…EERT), 791–839 (RSSA…LRPP), 861–992 (SSVS…QARE), and 1331–1369 (WKLQ…TTPR). 2 stretches are compositionally biased toward polar residues: residues 246–262 (PSTS…TQTV) and 392–401 (LHTTPKQGSA). The tract at residues 641 to 980 (RPKIITYIRR…PKQRTAAARN (340 aa)) is mediates interaction with MAPRE1. The segment at 801-890 (GPITTATSLY…TRSTFGNEEQ (90 aa)) is sufficient for interaction with KIF2C. The segment at 801–1150 (GPITTATSLY…HDAALLEMEN (350 aa)) is localization to the growing distal tip of microtubules. Over residues 804-814 (TTATSLYSSDP) the composition is skewed to polar residues. Low complexity predominate over residues 821 to 834 (ASSSNAAKSNLPKS). Over residues 937–947 (TKKDAQKDQDT) the composition is skewed to basic and acidic residues. A coiled-coil region spans residues 991–1335 (REAERQLVLR…NEELLWKLQT (345 aa)). Over residues 1348 to 1369 (SPVYRGSSSGPSSPARVSTTPR) the composition is skewed to low complexity.

In the C-terminal section; belongs to the MTUS1 family. Homodimer. Interacts with KIF2C and MAPRE1; the interaction is direct and probably targets MTUS2 and KIF2C to microtubules. Detected in embryonic stem cells differentiating to cardiomyocytes.

It is found in the cytoplasm. The protein localises to the cytoskeleton. In terms of biological role, binds microtubules. Together with MAPRE1 may target the microtubule depolymerase KIF2C to the plus-end of microtubules. May regulate the dynamics of microtubules at their growing distal tip. The protein is Microtubule-associated tumor suppressor candidate 2 (MTUS2) of Homo sapiens (Human).